The following is a 462-amino-acid chain: Semenogelin-1 (462 aa).

The N-terminal stretch at 1 to 23 is a signal peptide; that stretch reads MKPNIIFVLSLLLILEKQAAVMG. The residue at position 24 (Gln-24) is a Pyrrolidone carboxylic acid. The interval 24-61 is disordered; it reads QKGGSKGRLPSEFSQFPHGQKGQHYSGQKGKQQTESKG. The span at 46–61 shows a compositional bias: polar residues; the sequence is QHYSGQKGKQQTESKG. A run of 3 repeats spans residues 70 to 129, 141 to 200, and 201 to 260. Positions 70-439 are repeat-rich region; the sequence is HVDANDHDQS…SHGGLDIVII (370 aa). Disordered stretches follow at residues 131-157 and 173-194; these read KGGKAHRGTQNPSQDQGNSPSGKGISS and KEQTSVSGAQKGRKQGGSQSSY. The span at 138–157 shows a compositional bias: polar residues; the sequence is GTQNPSQDQGNSPSGKGISS. Residues 164–283 are interaction with EPPIN; sequence ERLWVHGLSK…NQDQQHGRKA (120 aa). Residues 261–380 are 2 X 60 AA tandem repeats, type 1; sequence LVYNKNQHQT…QRSIYSQTEK (120 aa). The interval 270-432 is disordered; sequence TKNLNQDQQH…KGRHQHGSHG (163 aa). Composition is skewed to polar residues over residues 308–317, 324–335, and 343–352; these read DVSQSSIYSQ, GKSQKQITIPSQ, and ANKISYQSSS. The stretch at 381–439 is one 3-2 repeat; it reads LVAGKSQIQAPNPKQEPWHGENAKGESGQSTNREQDLLSHEQKGRHQHGSHGGLDIVII. Residues 413 to 424 show a composition bias toward basic and acidic residues; that stretch reads REQDLLSHEQKG.

Belongs to the semenogelin family. As to quaternary structure, occurs in disulfide-linked complexes which may also contain two less abundant 71- and 76-kDa semenogelin-related polypeptides. Interacts with EPPIN (via C-terminus); Cys-239 is a critical amino acid for both binding to EPPIN. Transglutaminase substrate. In terms of processing, rapidly cleaved after ejaculation by KLK3/PSA, resulting in liquefaction of the semen coagulum and the progressive release of motile spermatozoa. Seminal vesicle.

It is found in the secreted. Its function is as follows. Predominant protein in semen. It participates in the formation of a gel matrix entrapping the accessory gland secretions and ejaculated spermatozoa. Fragments of semenogelin and/or fragments of the related proteins may contribute to the activation of progressive sperm movements as the gel-forming proteins are fragmented by KLK3/PSA. Functionally, alpha-inhibin-92 and alpha-inhibin-31, derived from the proteolytic degradation of semenogelin, inhibit the secretion of pituitary follicle-stimulating hormone. This is Semenogelin-1 (SEMG1) from Homo sapiens (Human).